Reading from the N-terminus, the 145-residue chain is Large ribosomal subunit protein uL14m (145 aa).

The N-terminal 30 residues, 1–30 (MAVLTGLFGFFAYVRGAVSQRCFSTSGSLS), are a transit peptide targeting the mitochondrion.

It belongs to the universal ribosomal protein uL14 family. As to quaternary structure, component of the mitochondrial ribosome large subunit (39S) which comprises a 16S rRNA and about 50 distinct proteins. Interacts with MALSU1.

It localises to the mitochondrion. Functionally, may form part of 2 intersubunit bridges in the assembled ribosome. Upon binding to MALSU1, intersubunit bridge formation is blocked, preventing ribosome formation and repressing translation. The polypeptide is Large ribosomal subunit protein uL14m (Mrpl14) (Rattus norvegicus (Rat)).